A 153-amino-acid polypeptide reads, in one-letter code: Large ribosomal subunit protein bL9 (153 aa).

Belongs to the bacterial ribosomal protein bL9 family.

Its function is as follows. Binds to the 23S rRNA. In Synechococcus sp. (strain JA-3-3Ab) (Cyanobacteria bacterium Yellowstone A-Prime), this protein is Large ribosomal subunit protein bL9.